The chain runs to 369 residues: Beta-1,4-galactosyltransferase 2 (369 aa).

Over 1–15 the chain is Cytoplasmic; it reads MSRLLGGTLERVCKA. The helical; Signal-anchor for type II membrane protein transmembrane segment at 16–36 threads the bilayer; sequence VLLLCLLHFLVAVILYFDVYA. Topologically, residues 37 to 369 are lumenal; that stretch reads QHLAFFSRFS…GRPMSWLNQG (333 aa). Polar residues predominate over residues 59-75; it reads SSSTNCSRPNATASSSG. A disordered region spans residues 59–90; the sequence is SSSTNCSRPNATASSSGLPEVPSARPGPTAPV. Asn-63 and Asn-68 each carry an N-linked (GlcNAc...) asparagine glycan. A disulfide bridge links Cys-94 with Cys-136. Residues 147–151, 186–188, 214–215, and Trp-275 each bind UDP-alpha-D-galactose; these read PFRHR, FNR, and VD. A disulfide bond links Cys-208 and Cys-227. Mn(2+) is bound at residue Asp-215. Residue 277 to 280 participates in N-acetyl-D-glucosamine binding; the sequence is GEDD. Residue His-308 participates in Mn(2+) binding. 308-310 lines the UDP-alpha-D-galactose pocket; sequence HDR. Arg-320 lines the N-acetyl-D-glucosamine pocket. Asn-354 carries N-linked (GlcNAc...) asparagine glycosylation.

This sequence belongs to the glycosyltransferase 7 family. The cofactor is Mn(2+).

Its subcellular location is the golgi apparatus. The protein resides in the golgi stack membrane. The enzyme catalyses D-glucose + UDP-alpha-D-galactose = lactose + UDP + H(+). It catalyses the reaction an N-acetyl-beta-D-glucosaminyl derivative + UDP-alpha-D-galactose = a beta-D-galactosyl-(1-&gt;4)-N-acetyl-beta-D-glucosaminyl derivative + UDP + H(+). It carries out the reaction N-acetyl-D-glucosamine + UDP-alpha-D-galactose = beta-D-galactosyl-(1-&gt;4)-N-acetyl-D-glucosamine + UDP + H(+). It functions in the pathway protein modification; protein glycosylation. Responsible for the synthesis of complex-type N-linked oligosaccharides in many glycoproteins as well as the carbohydrate moieties of glycolipids. Can produce lactose. In Cricetulus griseus (Chinese hamster), this protein is Beta-1,4-galactosyltransferase 2 (B4GALT2).